Consider the following 432-residue polypeptide: Transcriptional adapter 3 (432 aa).

A Glycyl lysine isopeptide (Lys-Gly) (interchain with G-Cter in SUMO2) cross-link involves residue lysine 21. A coiled-coil region spans residues 40–69 (IEELDTLQLELETLLSSASRRLRVLEAETQ). The disordered stretch occupies residues 87-126 (GRDHELGAPPKHGKPKKQKLEGKAGHGPGPGPGRPKSKNL). Lysine 129 is covalently cross-linked (Glycyl lysine isopeptide (Lys-Gly) (interchain with G-Cter in SUMO2)). The interval 272-319 (NIISPMEDSPIPDMSGKESGADGASTSPRNQNKPFSVPHTKSLESRIK) is disordered. A phosphoserine mark is found at serine 280 and serine 298. The segment covering 295–305 (ASTSPRNQNKP) has biased composition (polar residues). The stretch at 367–407 (LLRLAKEEVSRQELRQRVRMADNEVMDAFRKIMAARQKKRT) forms a coiled coil. Lysine 418 is modified (N6-acetyllysine).

This sequence belongs to the NGG1 family. The PCAF complex is composed of a number of TBP-associated factors (TAFS), such as TAF5, TAF5L, TAF6, TAF6L, TAF9, TAF10 and TAF12, PCAF, and also PCAF-associated factors (PAFs), such as TADA2L/ADA2, TADA3L/ADA3 and SPT3. Interacts directly with TADA2L and PCAF and also with the high-risk HPV oncoprotein E6. Component of the STAGA transcription coactivator-HAT complex, at least composed of SUPT3H, GCN5L2, TAF5L, TAF6L, SUPT7L, TADA3L, TAD1L, TAF10, TAF12, TRRAP and TAF9. Component of the TFTC-HAT complex. Component of the ADA2A-containing complex (ATAC), composed of KAT14, KAT2A, TADA2L, TADA3L, ZZ3, MBIP, WDR5, YEATS2, CCDC101 and DR1. As to expression, ubiquitously expressed.

The protein localises to the nucleus. Functionally, functions as a component of the PCAF complex. The PCAF complex is capable of efficiently acetylating histones in a nucleosomal context. The PCAF complex could be considered as the human version of the yeast SAGA complex. Also known as a coactivator for p53/TP53-dependent transcriptional activation. Component of the ATAC complex, a complex with histone acetyltransferase activity on histones H3 and H4. This Homo sapiens (Human) protein is Transcriptional adapter 3 (TADA3).